We begin with the raw amino-acid sequence, 339 residues long: Uroporphyrinogen decarboxylase (339 aa).

Substrate is bound by residues 23-27 (RQAGR), Asp-72, Tyr-147, Thr-202, and His-315.

This sequence belongs to the uroporphyrinogen decarboxylase family. Homodimer.

It is found in the cytoplasm. It carries out the reaction uroporphyrinogen III + 4 H(+) = coproporphyrinogen III + 4 CO2. It participates in porphyrin-containing compound metabolism; protoporphyrin-IX biosynthesis; coproporphyrinogen-III from 5-aminolevulinate: step 4/4. Its function is as follows. Catalyzes the decarboxylation of four acetate groups of uroporphyrinogen-III to yield coproporphyrinogen-III. The chain is Uroporphyrinogen decarboxylase from Geotalea uraniireducens (strain Rf4) (Geobacter uraniireducens).